Here is a 129-residue protein sequence, read N- to C-terminus: MARKQVSRKRRVKKNIENGVAHIRSTFNNTIVTITDEFGNALSWSSAGALGFRGSRKSTPFAAQMASETASKAAMEHGLKTVEVTVKGPGQGREAAIRALQSAGLEITAIKDVTPVPHNGCRPPKRRRV.

The protein belongs to the universal ribosomal protein uS11 family. Part of the 30S ribosomal subunit. Interacts with proteins S7 and S18. Binds to IF-3.

Located on the platform of the 30S subunit, it bridges several disparate RNA helices of the 16S rRNA. Forms part of the Shine-Dalgarno cleft in the 70S ribosome. This Macrococcus caseolyticus (strain JCSC5402) (Macrococcoides caseolyticum) protein is Small ribosomal subunit protein uS11.